The primary structure comprises 121 residues: Large ribosomal subunit protein bL12 (121 aa).

The protein belongs to the bacterial ribosomal protein bL12 family. In terms of assembly, homodimer. Part of the ribosomal stalk of the 50S ribosomal subunit. Forms a multimeric L10(L12)X complex, where L10 forms an elongated spine to which 2 to 4 L12 dimers bind in a sequential fashion. Binds GTP-bound translation factors.

Functionally, forms part of the ribosomal stalk which helps the ribosome interact with GTP-bound translation factors. Is thus essential for accurate translation. The polypeptide is Large ribosomal subunit protein bL12 (Anoxybacillus flavithermus (strain DSM 21510 / WK1)).